The following is a 457-amino-acid chain: Allantoinase (457 aa).

Zn(2+)-binding residues include His58, His60, Lys145, His181, His237, and Asp310. Position 145 is an N6-carboxylysine (Lys145).

Belongs to the metallo-dependent hydrolases superfamily. Allantoinase family. Homotetramer. Requires Zn(2+) as cofactor. In terms of processing, carboxylation allows a single lysine to coordinate two zinc ions.

The catalysed reaction is (S)-allantoin + H2O = allantoate + H(+). It functions in the pathway nitrogen metabolism; (S)-allantoin degradation; allantoate from (S)-allantoin: step 1/1. In terms of biological role, catalyzes the conversion of allantoin (5-ureidohydantoin) to allantoic acid by hydrolytic cleavage of the five-member hydantoin ring. In Solibacter usitatus (strain Ellin6076), this protein is Allantoinase.